An 80-amino-acid polypeptide reads, in one-letter code: Exodeoxyribonuclease 7 small subunit (80 aa).

Belongs to the XseB family. As to quaternary structure, heterooligomer composed of large and small subunits.

The protein resides in the cytoplasm. The catalysed reaction is Exonucleolytic cleavage in either 5'- to 3'- or 3'- to 5'-direction to yield nucleoside 5'-phosphates.. Bidirectionally degrades single-stranded DNA into large acid-insoluble oligonucleotides, which are then degraded further into small acid-soluble oligonucleotides. The sequence is that of Exodeoxyribonuclease 7 small subunit from Aliivibrio fischeri (strain ATCC 700601 / ES114) (Vibrio fischeri).